The following is a 395-amino-acid chain: S-adenosylmethionine synthase (395 aa).

His-16 contributes to the ATP binding site. Asp-18 serves as a coordination point for Mg(2+). Glu-44 is a K(+) binding site. L-methionine is bound by residues Glu-57 and Gln-100. The flexible loop stretch occupies residues 100–110 (QSPDIAQGVDD). ATP-binding positions include 174 to 176 (DAK), 241 to 242 (RF), Asp-250, 256 to 257 (RK), Ala-273, and Lys-277. Asp-250 lines the L-methionine pocket. Lys-281 provides a ligand contact to L-methionine.

Belongs to the AdoMet synthase family. In terms of assembly, homotetramer; dimer of dimers. Mg(2+) serves as cofactor. K(+) is required as a cofactor.

The protein localises to the cytoplasm. It carries out the reaction L-methionine + ATP + H2O = S-adenosyl-L-methionine + phosphate + diphosphate. The protein operates within amino-acid biosynthesis; S-adenosyl-L-methionine biosynthesis; S-adenosyl-L-methionine from L-methionine: step 1/1. Functionally, catalyzes the formation of S-adenosylmethionine (AdoMet) from methionine and ATP. The overall synthetic reaction is composed of two sequential steps, AdoMet formation and the subsequent tripolyphosphate hydrolysis which occurs prior to release of AdoMet from the enzyme. This chain is S-adenosylmethionine synthase, found in Limosilactobacillus reuteri (strain DSM 20016) (Lactobacillus reuteri).